The following is a 348-amino-acid chain: MTSKTRKVAVITGANSNLGLNIAYRLIERQSADVRLTLVVTSRTLPRVREVVELIKKFVATQEDPCSVDFDYLLVDFTNMVSVLNAYYDLNQKYESINYFFVNAAQGVYDGIDWIGAVKQVLSDPLEAVTNPTYRKQLVGVKSKDEMGLVFQANVFGPYYLIQKILPQLSKGKATVVWISSIMADPKHLSLQDIEMIKSDVTYEGSKRVVDLLHLATYKQMKSQGIHQYVVQPGIFTSYSFAKYLNFFTTFGMLFLFYLARLLGSKWHNIDGYKAANAPVYVATLINPHFEHQEVKYGSASSRDGMEYIETTDIDKTGSSDVLAYIEKKKLEWDDKLKDQITNSRIPI.

3 residues coordinate NADP(+): leucine 18, threonine 41, and arginine 47. Active-site proton donor residues include serine 180 and tyrosine 203. 3 residues coordinate NADP(+): tyrosine 203, lysine 207, and serine 238. Lysine 207 functions as the Lowers pKa of active site Tyr in the catalytic mechanism.

It belongs to the short-chain dehydrogenases/reductases (SDR) family. ERG27 subfamily.

The catalysed reaction is a 3beta-hydroxysteroid + NADP(+) = a 3-oxosteroid + NADPH + H(+). The protein operates within steroid biosynthesis; zymosterol biosynthesis; zymosterol from lanosterol: step 5/6. Its function is as follows. Responsible for the reduction of the keto group on the C-3 of sterols. The polypeptide is 3-keto-steroid reductase (ERG27) (Candida glabrata (strain ATCC 2001 / BCRC 20586 / JCM 3761 / NBRC 0622 / NRRL Y-65 / CBS 138) (Yeast)).